Consider the following 468-residue polypeptide: GTPase Der (468 aa).

2 consecutive EngA-type G domains span residues 3–169 (PVMA…SPPD) and 199–372 (IRLA…KAAT). Residues 9 to 16 (GRANVGKS), 56 to 60 (DTGGF), 119 to 122 (NKAE), 205 to 212 (GRPNVGKS), 252 to 256 (DTAGL), and 317 to 320 (NKWD) contribute to the GTP site. Residues 373–457 (CKMSTPVLTR…PLRIELKTSH (85 aa)) form the KH-like domain.

The protein belongs to the TRAFAC class TrmE-Era-EngA-EngB-Septin-like GTPase superfamily. EngA (Der) GTPase family. Associates with the 50S ribosomal subunit.

In terms of biological role, GTPase that plays an essential role in the late steps of ribosome biogenesis. The chain is GTPase Der from Verminephrobacter eiseniae (strain EF01-2).